Consider the following 144-residue polypeptide: 3-hydroxyacyl-[acyl-carrier-protein] dehydratase FabZ (144 aa).

His-48 is an active-site residue.

The protein belongs to the thioester dehydratase family. FabZ subfamily.

The protein resides in the cytoplasm. It catalyses the reaction a (3R)-hydroxyacyl-[ACP] = a (2E)-enoyl-[ACP] + H2O. Its function is as follows. Involved in unsaturated fatty acids biosynthesis. Catalyzes the dehydration of short chain beta-hydroxyacyl-ACPs and long chain saturated and unsaturated beta-hydroxyacyl-ACPs. The protein is 3-hydroxyacyl-[acyl-carrier-protein] dehydratase FabZ of Bacillus anthracis (strain A0248).